Here is a 258-residue protein sequence, read N- to C-terminus: Type III pantothenate kinase (258 aa).

6–13 (DAGNTRIK) provides a ligand contact to ATP. Substrate is bound by residues Tyr-98 and 105 to 108 (GSDR). Residue Asp-107 is the Proton acceptor of the active site. Thr-131 is a binding site for ATP. Thr-184 serves as a coordination point for substrate.

It belongs to the type III pantothenate kinase family. As to quaternary structure, homodimer. Requires NH4(+) as cofactor. It depends on K(+) as a cofactor.

It localises to the cytoplasm. It catalyses the reaction (R)-pantothenate + ATP = (R)-4'-phosphopantothenate + ADP + H(+). Its pathway is cofactor biosynthesis; coenzyme A biosynthesis; CoA from (R)-pantothenate: step 1/5. Its function is as follows. Catalyzes the phosphorylation of pantothenate (Pan), the first step in CoA biosynthesis. The chain is Type III pantothenate kinase from Herminiimonas arsenicoxydans.